Here is a 258-residue protein sequence, read N- to C-terminus: Aspartate/glutamate leucyltransferase (258 aa).

This sequence belongs to the R-transferase family. Bpt subfamily.

The protein resides in the cytoplasm. The catalysed reaction is N-terminal L-glutamyl-[protein] + L-leucyl-tRNA(Leu) = N-terminal L-leucyl-L-glutamyl-[protein] + tRNA(Leu) + H(+). It carries out the reaction N-terminal L-aspartyl-[protein] + L-leucyl-tRNA(Leu) = N-terminal L-leucyl-L-aspartyl-[protein] + tRNA(Leu) + H(+). Its function is as follows. Functions in the N-end rule pathway of protein degradation where it conjugates Leu from its aminoacyl-tRNA to the N-termini of proteins containing an N-terminal aspartate or glutamate. This chain is Aspartate/glutamate leucyltransferase, found in Bradyrhizobium diazoefficiens (strain JCM 10833 / BCRC 13528 / IAM 13628 / NBRC 14792 / USDA 110).